We begin with the raw amino-acid sequence, 522 residues long: F-box-like/WD repeat-containing protein TBL1XR1-B (522 aa).

Residues 4–36 (SSDEVNFLVYRYLQESGFSHSAFTFGIESHISQ) form the LisH domain. The region spanning 41–86 (GALVPPAALISIIQKGLQYVEAEVSINEDGTLFDGRPIESLSLIDA) is the F-box-like domain. Positions 122–150 (ATSANNQQPPAKNGESTANGEENGGHALA) are disordered. The segment covering 123 to 141 (TSANNQQPPAKNGESTANG) has biased composition (polar residues). WD repeat units follow at residues 175–214 (GHESEVFICAWNPVSDLLASGSGDSTARIWNLSENSTSGS), 231–270 (PSNKDVTSLDWNSEGTLLATGSYDGFARIWTKDGNLASTL), 272–311 (QHKGPIFALKWNKKGNFILSAGVDKTTIIWDAHTGEAKQQ), 314–352 (FHSAPALDVDWQSNNTFASCSTDMCIHVCKLGQDRPIKT), 355–394 (GHTNEVNAIKWDPTGNLLASCSDDMTLKIWSMKHDTCVHD), 397–445 (AHNK…CIHT), 448–487 (KHQEPVYSVAFSPDGRYLASGSFDKCVHIWNTQTGALVHS), and 489–522 (RGTGGIFEVCWNAAGDKVGASASDGSVCVLDLRK).

Belongs to the WD repeat EBI family. As to quaternary structure, interacts with heterodimers of rxra and thrb, and this interaction is abrogated by thyroid hormone binding to thrb. Interacts with ncor1.

Its subcellular location is the nucleus. Its function is as follows. F-box-like protein which acts as an integral component of the N-CoR transcriptional corepressor complex. Probably regulates transcription activation mediated by nuclear receptors. May mediate the recruitment of the 19S proteasome complex, leading to the subsequent proteasomal degradation of the N-CoR complex, thereby allowing cofactor exchange and transcription activation. In Xenopus laevis (African clawed frog), this protein is F-box-like/WD repeat-containing protein TBL1XR1-B (tbl1xr1-b).